The chain runs to 721 residues: Polyribonucleotide nucleotidyltransferase (721 aa).

Residues D490 and D496 each coordinate Mg(2+). The KH domain maps to 557-618 (PRILTLKINP…EAVRQKIEGL (62 aa)). The S1 motif domain maps to 625–693 (GEEYEGTVVK…DRGKIDLIRP (69 aa)). The tract at residues 696 to 721 (EGKIAPREPRAARAGGDRGGRPPRRE) is disordered.

It belongs to the polyribonucleotide nucleotidyltransferase family. The cofactor is Mg(2+).

It localises to the cytoplasm. The enzyme catalyses RNA(n+1) + phosphate = RNA(n) + a ribonucleoside 5'-diphosphate. Its function is as follows. Involved in mRNA degradation. Catalyzes the phosphorolysis of single-stranded polyribonucleotides processively in the 3'- to 5'-direction. The chain is Polyribonucleotide nucleotidyltransferase from Deinococcus geothermalis (strain DSM 11300 / CIP 105573 / AG-3a).